The chain runs to 512 residues: Maturase K (512 aa).

It belongs to the intron maturase 2 family. MatK subfamily.

It is found in the plastid. The protein localises to the chloroplast. Its function is as follows. Usually encoded in the trnK tRNA gene intron. Probably assists in splicing its own and other chloroplast group II introns. The protein is Maturase K of Erythranthe guttata (Yellow monkey flower).